The primary structure comprises 708 residues: Elongation factor G 1 (708 aa).

The tr-type G domain maps to 9–295; the sequence is AKVRNIGIMA…AVVRYLPTPL (287 aa). GTP contacts are provided by residues 18-25, 86-90, and 140-143; these read AHIDAGKT, DTPGH, and NKLD.

Belongs to the TRAFAC class translation factor GTPase superfamily. Classic translation factor GTPase family. EF-G/EF-2 subfamily.

It is found in the cytoplasm. Catalyzes the GTP-dependent ribosomal translocation step during translation elongation. During this step, the ribosome changes from the pre-translocational (PRE) to the post-translocational (POST) state as the newly formed A-site-bound peptidyl-tRNA and P-site-bound deacylated tRNA move to the P and E sites, respectively. Catalyzes the coordinated movement of the two tRNA molecules, the mRNA and conformational changes in the ribosome. The sequence is that of Elongation factor G 1 (fusA) from Streptomyces coelicolor (strain ATCC BAA-471 / A3(2) / M145).